A 157-amino-acid polypeptide reads, in one-letter code: Nascent polypeptide-associated complex subunit alpha (157 aa).

One can recognise an NAC-A/B domain in the interval 6–71; it reads TTDESHIHKT…LGSPVNLHQL (66 aa). Over residues 81–107 the composition is skewed to basic and acidic residues; the sequence is SSKDQEGPGLYDEIHSDPQEDGVKEAE. The segment at 81–116 is disordered; the sequence is SSKDQEGPGLYDEIHSDPQEDGVKEAEEITVDPSDE. One can recognise a UBA domain in the interval 118–157; sequence LSEEDIKLISSQVKASRNDIIKALVESEYDVVDAMMKLTK.

This sequence belongs to the NAC-alpha family.

The protein localises to the cytoplasm. It localises to the nucleus. May be involved in mitochondrial protein import by enhancing productive ribosome interactions with the outer mitochondrial membrane and blocks the inappropriate interaction of ribosomes translating non-secretory nascent polypeptides with translocation sites in the membrane of the endoplasmic reticulum. EGD2 may also be involved in transcription regulation. The chain is Nascent polypeptide-associated complex subunit alpha (EGD2) from Encephalitozoon cuniculi (strain GB-M1) (Microsporidian parasite).